A 475-amino-acid polypeptide reads, in one-letter code: Glycogen synthase (475 aa).

Lys15 is an ADP-alpha-D-glucose binding site.

Belongs to the glycosyltransferase 1 family. Bacterial/plant glycogen synthase subfamily.

The catalysed reaction is [(1-&gt;4)-alpha-D-glucosyl](n) + ADP-alpha-D-glucose = [(1-&gt;4)-alpha-D-glucosyl](n+1) + ADP + H(+). Its pathway is glycan biosynthesis; glycogen biosynthesis. Synthesizes alpha-1,4-glucan chains using ADP-glucose. The protein is Glycogen synthase of Anaeromyxobacter sp. (strain Fw109-5).